A 191-amino-acid chain; its full sequence is Vascular endothelial growth factor A (191 aa).

The signal sequence occupies residues M1 to A26. Intrachain disulfides connect C52–C94, C83–C128, and C87–C130. Residue N101 is glycosylated (N-linked (GlcNAc...) asparagine).

It belongs to the PDGF/VEGF growth factor family. In terms of assembly, homodimer; disulfide-linked. Also found as heterodimer with PGF. Expressed by the venom gland, and probably other tissues.

Its subcellular location is the secreted. Its function is as follows. Growth factor active in angiogenesis, vasculogenesis and endothelial cell growth. Induces endothelial cell proliferation, promotes cell migration, inhibits apoptosis and induces permeabilization of blood vessels. Binds to heparan sulfate and heparin. In Bitis gabonica (Gaboon adder), this protein is Vascular endothelial growth factor A.